We begin with the raw amino-acid sequence, 474 residues long: NAD(P) transhydrogenase subunit beta (474 aa).

A run of 9 helical transmembrane segments spans residues 4 to 24, 46 to 66, 83 to 103, 132 to 152, 181 to 200, 202 to 222, 229 to 249, 253 to 273, and 321 to 341; these read GLVQAAYILAALLFIMSLAGL, IATIFGPHSEGTFWIIIAMII, MPELVAILHSFVGLAAVLVGF, VLTNIHNVEVFLGIFIGAVTF, LAALVVSALLMVAFLNNPES, FPVLLMTAIALAFGWHLVASI, VVVSMLNSYSGWAAAAAGFIL, LLIVTGALVGSSGAILSYIMC, and VIITPGYGMAVAQAQYPVADI.

This sequence belongs to the PNT beta subunit family. Heterodimer of an alpha and a beta chain.

It is found in the cell inner membrane. The catalysed reaction is NAD(+) + NADPH + H(+)(in) = NADH + NADP(+) + H(+)(out). In terms of biological role, the transhydrogenation between NADH and NADP is coupled to respiration and ATP hydrolysis and functions as a proton pump across the membrane. In Haemophilus influenzae (strain ATCC 51907 / DSM 11121 / KW20 / Rd), this protein is NAD(P) transhydrogenase subunit beta (pntB).